The primary structure comprises 510 residues: NAD(P)H-quinone oxidoreductase subunit 2 B, chloroplastic (510 aa).

A run of 13 helical transmembrane segments spans residues 24–44 (LLLFDGSFIFPECILIFGLIL), 57–77 (IPWLYFISSTSLVMSITALLF), 99–119 (IFQFLILLCSTLCIPLSVEYI), 124–144 (MAITEFLLFVLTATLGGMFLC), 149–169 (LITIFVAPECFSLCSYLLSGY), 183–203 (YLLMGGASSSILVHGFSWLYG), 227–247 (PGISIALIFITVGIGFKLSLA), 295–315 (WHLLLEILAILSMILGNLIAI), 323–343 (MLAYSSIGQIGYVIIGIIVGD), 354–374 (YMLFYISMNLGTFACIVLFGL), 395–415 (ALSLALCLLSLGGLPPLAGFF), 418–438 (LHLFWCGWQAGLYFLVSIGLL), and 484–504 (MIVCVIASTILGISMNPIIAI).

This sequence belongs to the complex I subunit 2 family. NDH is composed of at least 16 different subunits, 5 of which are encoded in the nucleus.

It is found in the plastid. It localises to the chloroplast thylakoid membrane. The catalysed reaction is a plastoquinone + NADH + (n+1) H(+)(in) = a plastoquinol + NAD(+) + n H(+)(out). The enzyme catalyses a plastoquinone + NADPH + (n+1) H(+)(in) = a plastoquinol + NADP(+) + n H(+)(out). NDH shuttles electrons from NAD(P)H:plastoquinone, via FMN and iron-sulfur (Fe-S) centers, to quinones in the photosynthetic chain and possibly in a chloroplast respiratory chain. The immediate electron acceptor for the enzyme in this species is believed to be plastoquinone. Couples the redox reaction to proton translocation, and thus conserves the redox energy in a proton gradient. The polypeptide is NAD(P)H-quinone oxidoreductase subunit 2 B, chloroplastic (Citrus sinensis (Sweet orange)).